The primary structure comprises 405 residues: Lipase lipl-1 (405 aa).

A signal peptide spans 1–20 (MRSWSTVMLAVLATAATVFG). Asparagine 66 carries N-linked (GlcNAc...) asparagine glycosylation. The Nucleophile role is filled by serine 169. N-linked (GlcNAc...) asparagine glycosylation is present at asparagine 273. Active-site charge relay system residues include aspartate 344 and histidine 376.

This sequence belongs to the AB hydrolase superfamily. Lipase family.

It is found in the secreted. The protein resides in the lysosome lumen. Its function is as follows. Lipase that, together with lipl-3, plays a role in the response to nutrient deprivation by controlling lipid metabolism. Specifically, involved in the breakdown of lipids during lipophagy, a process during which lipids contained in lipid droplets that have been delivered to lysosomes by autophagy are degraded. The protein is Lipase lipl-1 of Caenorhabditis elegans.